The chain runs to 161 residues: Ubiquitin-conjugating enzyme E2Q-like protein 1 (161 aa).

Positions 1-154 (MKELQDIARL…VKTHEKYGWV (154 aa)) constitute a UBC core domain. The active-site Glycyl thioester intermediate is the Cys88.

The protein belongs to the ubiquitin-conjugating enzyme family. Interacts with FBXW7.

The protein resides in the nucleus. It catalyses the reaction S-ubiquitinyl-[E1 ubiquitin-activating enzyme]-L-cysteine + [E2 ubiquitin-conjugating enzyme]-L-cysteine = [E1 ubiquitin-activating enzyme]-L-cysteine + S-ubiquitinyl-[E2 ubiquitin-conjugating enzyme]-L-cysteine.. It participates in protein modification; protein ubiquitination. In terms of biological role, probable E2 ubiquitin-protein ligase that catalyzes the covalent attachment of ubiquitin to target proteins. May facilitate the monoubiquitination and degradation of MTOR and CCNE1 through interaction with FBXW7. This is Ubiquitin-conjugating enzyme E2Q-like protein 1 (Ube2ql1) from Mus musculus (Mouse).